The primary structure comprises 550 residues: Dihydroxy-acid dehydratase (550 aa).

Aspartate 78 lines the Mg(2+) pocket. A [2Fe-2S] cluster-binding site is contributed by cysteine 119. The Mg(2+) site is built by aspartate 120 and lysine 121. Lysine 121 bears the N6-carboxylysine mark. Cysteine 191 is a binding site for [2Fe-2S] cluster. Mg(2+) is bound at residue glutamate 440. Serine 466 acts as the Proton acceptor in catalysis.

This sequence belongs to the IlvD/Edd family. As to quaternary structure, homodimer. The cofactor is [2Fe-2S] cluster. It depends on Mg(2+) as a cofactor.

It catalyses the reaction (2R)-2,3-dihydroxy-3-methylbutanoate = 3-methyl-2-oxobutanoate + H2O. The enzyme catalyses (2R,3R)-2,3-dihydroxy-3-methylpentanoate = (S)-3-methyl-2-oxopentanoate + H2O. It participates in amino-acid biosynthesis; L-isoleucine biosynthesis; L-isoleucine from 2-oxobutanoate: step 3/4. Its pathway is amino-acid biosynthesis; L-valine biosynthesis; L-valine from pyruvate: step 3/4. Its function is as follows. Functions in the biosynthesis of branched-chain amino acids. Catalyzes the dehydration of (2R,3R)-2,3-dihydroxy-3-methylpentanoate (2,3-dihydroxy-3-methylvalerate) into 2-oxo-3-methylpentanoate (2-oxo-3-methylvalerate) and of (2R)-2,3-dihydroxy-3-methylbutanoate (2,3-dihydroxyisovalerate) into 2-oxo-3-methylbutanoate (2-oxoisovalerate), the penultimate precursor to L-isoleucine and L-valine, respectively. This Methanococcus vannielii (strain ATCC 35089 / DSM 1224 / JCM 13029 / OCM 148 / SB) protein is Dihydroxy-acid dehydratase.